The sequence spans 196 residues: Imidazoleglycerol-phosphate dehydratase (196 aa).

The protein belongs to the imidazoleglycerol-phosphate dehydratase family.

The protein resides in the cytoplasm. The catalysed reaction is D-erythro-1-(imidazol-4-yl)glycerol 3-phosphate = 3-(imidazol-4-yl)-2-oxopropyl phosphate + H2O. It participates in amino-acid biosynthesis; L-histidine biosynthesis; L-histidine from 5-phospho-alpha-D-ribose 1-diphosphate: step 6/9. This chain is Imidazoleglycerol-phosphate dehydratase, found in Dehalococcoides mccartyi (strain CBDB1).